Here is a 1017-residue protein sequence, read N- to C-terminus: EMILIN-1 (1017 aa).

Residues 1-21 (MAPRALWSCYLCCLLTIATEA) form the signal peptide. One can recognise an EMI domain in the interval 56–133 (HRNWCAYVVT…QGYGGDDCGE (78 aa)). 3 disulfide bridges follow: cysteine 60–cysteine 123, cysteine 87–cysteine 94, and cysteine 122–cysteine 131. Disordered regions lie at residues 134-180 (GPAS…SEKV) and 259-289 (ELGHLNNHHNGGPGGGGRASGPVPVPSGPSE). Residues 154-167 (RPNLSGSSAGSHLS) are compositionally biased toward low complexity. N-linked (GlcNAc...) asparagine glycosylation occurs at asparagine 156. Coiled-coil stretches lie at residues 171–211 (GEGP…LAED), 237–266 (ETLSEIQQQLQLLDNRVSTHDQELGHLNNH), and 310–374 (LDGF…DVVT). The segment at 383 to 403 (RRGSELGGAAGQGGHPPGYTS) is disordered. Positions 387–398 (ELGGAAGQGGHP) are enriched in gly residues. N-linked (GlcNAc...) asparagine glycosylation is found at asparagine 416, asparagine 456, asparagine 562, and asparagine 659. Residues 519–573 (LHEAEAAGEAQQAVLEGLQGLLSRLRERMDAQEETAAEILLRLNLTAAQLSQLEG) adopt a coiled-coil conformation. The stretch at 676–697 (LADLGATKDSIISEINRLQQEA) forms a coiled coil. 2 N-linked (GlcNAc...) asparagine glycosylation sites follow: asparagine 767 and asparagine 795. A coiled-coil region spans residues 789-809 (RRLGALNNSLLLLEDRLQQLS). The span at 811 to 820 (KDFTGPSGKA) shows a compositional bias: low complexity. Residues 811–866 (KDFTGPSGKAGPPGPPGLQGPSGPAGPPGPPGKDGQQGAIGPPGPQGEQGAEGAPA) form a disordered region. Residues 815-865 (GPSGKAGPPGPPGLQGPSGPAGPPGPPGKDGQQGAIGPPGPQGEQGAEGAP) enclose the Collagen-like domain. Over residues 822-841 (PPGPPGLQGPSGPAGPPGPP) the composition is skewed to pro residues. Residues 843 to 866 (KDGQQGAIGPPGPQGEQGAEGAPA) are compositionally biased toward low complexity. A C1q domain is found at 867-1014 (APVPRVAFSA…GALLYEDTEL (148 aa)).

In terms of assembly, homotrimer associated through a moderately stable interaction of the C-terminal globular C1q domains, allowing the nucleation of the triple helix and then a further quaternary assembly to higher-order polymers via intermolecular disulfide bonds. Interacts with EMILIN2. Interacts with EFEMP2; this interaction promotes the incorporation of EFEMP2 into the extracellular matrix.

It is found in the secreted. It localises to the extracellular space. The protein resides in the extracellular matrix. Functionally, involved in elastic and collagen fibers formation. It is required for EFEMP2 deposition into the extracellular matrix, and collagen network assembly and cross-linking via protein-lysine 6-oxidase/LOX activity. May be responsible for anchoring smooth muscle cells to elastic fibers, and may be involved the processes that regulate vessel assembly. Has cell adhesive capacity. May have a function in placenta formation and initial organogenesis and a later role in interstitial connective tissue. This Mus musculus (Mouse) protein is EMILIN-1 (Emilin1).